We begin with the raw amino-acid sequence, 828 residues long: Periplasmic nitrate reductase (828 aa).

Residues 1–31 (MKLSRRSFMKANAVAAAAAAAGLSVPGVARA) constitute a signal peptide (tat-type signal). One can recognise a 4Fe-4S Mo/W bis-MGD-type domain in the interval 39–95 (IKWDKAPCRFCGTGCGVLVGTQQGRVVACQGDPDAPVNRGLNCIKGYFLPKIMYGKD). 4 residues coordinate [4Fe-4S] cluster: C46, C49, C53, and C81. Mo-bis(molybdopterin guanine dinucleotide) contacts are provided by residues K83, Q150, N175, C179, 212–219 (WGSNMAEM), 243–247 (STYQH), 262–264 (QSD), M372, Q376, N482, 508–509 (SD), K531, D558, and 718–727 (TGRVLEHWHT). Position 794 (F794) interacts with substrate. Residues N802 and K819 each coordinate Mo-bis(molybdopterin guanine dinucleotide).

This sequence belongs to the prokaryotic molybdopterin-containing oxidoreductase family. NasA/NapA/NarB subfamily. In terms of assembly, component of the periplasmic nitrate reductase NapAB complex composed of NapA and NapB. The cofactor is [4Fe-4S] cluster. Mo-bis(molybdopterin guanine dinucleotide) serves as cofactor. Post-translationally, predicted to be exported by the Tat system. The position of the signal peptide cleavage has not been experimentally proven.

It localises to the periplasm. The catalysed reaction is 2 Fe(II)-[cytochrome] + nitrate + 2 H(+) = 2 Fe(III)-[cytochrome] + nitrite + H2O. Its function is as follows. Catalytic subunit of the periplasmic nitrate reductase complex NapAB. Receives electrons from NapB and catalyzes the reduction of nitrate to nitrite. This is Periplasmic nitrate reductase from Escherichia coli O1:K1 / APEC.